Reading from the N-terminus, the 134-residue chain is Lymphocyte antigen 6I (134 aa).

The first 21 residues, 1–21 (MDTSHAIKSCVLILLVTLLCA), serve as a signal peptide directing secretion. Positions 27 to 105 (LECYQCYGVP…ISCCQEDLCN (79 aa)) constitute a UPAR/Ly6 domain. 5 disulfide bridges follow: Cys29–Cys53, Cys32–Cys41, Cys46–Cys74, Cys78–Cys98, and Cys99–Cys104. The N-linked (GlcNAc...) asparagine glycan is linked to Asn95. The GPI-anchor amidated glycine moiety is linked to residue Gly112. Residues 113-134 (SSWTTAGVLLFSLGSVLLQTLM) constitute a propeptide, removed in mature form.

In terms of tissue distribution, expressed in hematopoietic tissue (spleen, thymus, bone marrow). Also found in peritoneal macrophages, peripheral blood leukocytes, liver, heart, brain, kidney and lung.

It is found in the cell membrane. The polypeptide is Lymphocyte antigen 6I (Ly6i) (Mus musculus (Mouse)).